The primary structure comprises 339 residues: Anthranilate phosphoribosyltransferase (339 aa).

5-phospho-alpha-D-ribose 1-diphosphate is bound by residues G81, 84–85 (GD), S89, 91–94 (NVSS), 109–117 (KHGNRALSS), and A121. G81 contacts anthranilate. Residue S93 coordinates Mg(2+). N112 is a binding site for anthranilate. R167 contributes to the anthranilate binding site. Residues D225 and E226 each contribute to the Mg(2+) site.

This sequence belongs to the anthranilate phosphoribosyltransferase family. Homodimer. It depends on Mg(2+) as a cofactor.

The catalysed reaction is N-(5-phospho-beta-D-ribosyl)anthranilate + diphosphate = 5-phospho-alpha-D-ribose 1-diphosphate + anthranilate. Its pathway is amino-acid biosynthesis; L-tryptophan biosynthesis; L-tryptophan from chorismate: step 2/5. Functionally, catalyzes the transfer of the phosphoribosyl group of 5-phosphorylribose-1-pyrophosphate (PRPP) to anthranilate to yield N-(5'-phosphoribosyl)-anthranilate (PRA). The sequence is that of Anthranilate phosphoribosyltransferase from Brucella canis (strain ATCC 23365 / NCTC 10854 / RM-666).